An 83-amino-acid chain; its full sequence is Cytochrome c oxidase subunit 7A2, mitochondrial (83 aa).

The N-terminal 23 residues, 1–23, are a transit peptide targeting the mitochondrion; the sequence is MLRNLLALRQIAQRTISTTSRRH. Residues 24–48 lie on the Mitochondrial matrix side of the membrane; the sequence is FENKVPEKQKLFQEDNGMPVHLKGG. At K33 the chain carries N6-acetyllysine. A helical transmembrane segment spans residues 49–77; that stretch reads ASDALLYRATMALTLGGTAYAIYLLAMAA. The Mitochondrial intermembrane portion of the chain corresponds to 78–83; the sequence is FPKKQN.

Belongs to the cytochrome c oxidase VIIa family. Component of the cytochrome c oxidase (complex IV, CIV), a multisubunit enzyme composed of 14 subunits. The complex is composed of a catalytic core of 3 subunits MT-CO1, MT-CO2 and MT-CO3, encoded in the mitochondrial DNA, and 11 supernumerary subunits COX4I, COX5A, COX5B, COX6A, COX6B, COX6C, COX7A, COX7B, COX7C, COX8 and NDUFA4, which are encoded in the nuclear genome. The complex exists as a monomer or a dimer and forms supercomplexes (SCs) in the inner mitochondrial membrane with NADH-ubiquinone oxidoreductase (complex I, CI) and ubiquinol-cytochrome c oxidoreductase (cytochrome b-c1 complex, complex III, CIII), resulting in different assemblies (supercomplex SCI(1)III(2)IV(1) and megacomplex MCI(2)III(2)IV(2)). Interacts with PET100.

Its subcellular location is the mitochondrion inner membrane. It participates in energy metabolism; oxidative phosphorylation. Functionally, component of the cytochrome c oxidase, the last enzyme in the mitochondrial electron transport chain which drives oxidative phosphorylation. The respiratory chain contains 3 multisubunit complexes succinate dehydrogenase (complex II, CII), ubiquinol-cytochrome c oxidoreductase (cytochrome b-c1 complex, complex III, CIII) and cytochrome c oxidase (complex IV, CIV), that cooperate to transfer electrons derived from NADH and succinate to molecular oxygen, creating an electrochemical gradient over the inner membrane that drives transmembrane transport and the ATP synthase. Cytochrome c oxidase is the component of the respiratory chain that catalyzes the reduction of oxygen to water. Electrons originating from reduced cytochrome c in the intermembrane space (IMS) are transferred via the dinuclear copper A center (CU(A)) of subunit 2 and heme A of subunit 1 to the active site in subunit 1, a binuclear center (BNC) formed by heme A3 and copper B (CU(B)). The BNC reduces molecular oxygen to 2 water molecules using 4 electrons from cytochrome c in the IMS and 4 protons from the mitochondrial matrix. This Mus musculus (Mouse) protein is Cytochrome c oxidase subunit 7A2, mitochondrial (Cox7a2).